The primary structure comprises 400 residues: Ribosomal RNA dihydrouridine synthase (400 aa).

Residues Ala-14, Asp-33, Asn-34, Arg-40, Gly-46, Asn-51, Val-131, Glu-367, and Phe-380 each coordinate FAD.

It belongs to the BaiN/RdsA family. RdsA subfamily. FAD serves as cofactor.

It carries out the reaction a 5,6-dihydrouridine in mRNA + NAD(+) = a uridine in mRNA + NADH + H(+). In terms of biological role, catalyzes the synthesis of 5,6-dihydrouridine (D) at position 2449 in 23S rRNA. Can use NADH as a source of reducing equivalents but not NADPH. The sequence is that of Ribosomal RNA dihydrouridine synthase from Escherichia coli (strain K12).